Reading from the N-terminus, the 144-residue chain is 3-hydroxyacyl-[acyl-carrier-protein] dehydratase FabZ (144 aa).

Residue H49 is part of the active site.

Belongs to the thioester dehydratase family. FabZ subfamily.

Its subcellular location is the cytoplasm. It carries out the reaction a (3R)-hydroxyacyl-[ACP] = a (2E)-enoyl-[ACP] + H2O. Functionally, involved in unsaturated fatty acids biosynthesis. Catalyzes the dehydration of short chain beta-hydroxyacyl-ACPs and long chain saturated and unsaturated beta-hydroxyacyl-ACPs. The polypeptide is 3-hydroxyacyl-[acyl-carrier-protein] dehydratase FabZ (Alkaliphilus oremlandii (strain OhILAs) (Clostridium oremlandii (strain OhILAs))).